Here is a 539-residue protein sequence, read N- to C-terminus: GMP synthase [glutamine-hydrolyzing] (539 aa).

Residues K4–D202 form the Glutamine amidotransferase type-1 domain. C81 functions as the Nucleophile in the catalytic mechanism. Residues H176 and E178 contribute to the active site. The GMPS ATP-PPase domain maps to W203–R395. S230–S236 contacts ATP.

Homodimer.

It carries out the reaction XMP + L-glutamine + ATP + H2O = GMP + L-glutamate + AMP + diphosphate + 2 H(+). Its pathway is purine metabolism; GMP biosynthesis; GMP from XMP (L-Gln route): step 1/1. Functionally, catalyzes the synthesis of GMP from XMP. In Cupriavidus necator (strain ATCC 17699 / DSM 428 / KCTC 22496 / NCIMB 10442 / H16 / Stanier 337) (Ralstonia eutropha), this protein is GMP synthase [glutamine-hydrolyzing].